The chain runs to 475 residues: Flavin-dependent monooxygenase (475 aa).

The protein belongs to the aromatic-ring hydroxylase family. FAD serves as cofactor.

Its subcellular location is the cytoplasm. It carries out the reaction a tetracycline + NADPH + O2 + H(+) = an 11a-hydroxytetracycline + NADP(+) + H2O. The enzyme catalyses tetracycline + NADPH + O2 + H(+) = 11a-hydroxytetracycline + NADP(+) + H2O. Its activity is regulated as follows. Inhibited by anhydrotetracycline. Functionally, an FAD-requiring monooxygenase active on some tetracycline antibiotic derivatives, which leads to their inactivation. Hydroxylates carbon 11a of tetracycline and some analogs. Confers resistance to tetracycline and doxycycline via an oxidoreductase activity; probably monooxygenates the antibiotics. Does not act on tigecycline. The protein is Flavin-dependent monooxygenase of Mycobacteroides abscessus (strain ATCC 19977 / DSM 44196 / CCUG 20993 / CIP 104536 / JCM 13569 / NCTC 13031 / TMC 1543 / L948) (Mycobacterium abscessus).